Reading from the N-terminus, the 556-residue chain is Trigger factor (556 aa).

In terms of domain architecture, PPIase FKBP-type spans 169–255 (GDVVVIDFAA…LREIKAKELP (87 aa)). A compositionally biased stretch (polar residues) spans 438-452 (VDSEGNPTQAPTSLA). The interval 438–556 (VDSEGNPTQA…KPSKKDKKGK (119 aa)) is disordered. Residues 461–472 (PEAEFEADEPEA) are compositionally biased toward acidic residues. 2 stretches are compositionally biased toward low complexity: residues 486–503 (ETAT…AEAE) and 511–526 (EASP…AEAT).

This sequence belongs to the FKBP-type PPIase family. Tig subfamily.

It localises to the cytoplasm. It carries out the reaction [protein]-peptidylproline (omega=180) = [protein]-peptidylproline (omega=0). Involved in protein export. Acts as a chaperone by maintaining the newly synthesized protein in an open conformation. Functions as a peptidyl-prolyl cis-trans isomerase. In Synechococcus sp. (strain JA-2-3B'a(2-13)) (Cyanobacteria bacterium Yellowstone B-Prime), this protein is Trigger factor.